The following is a 372-amino-acid chain: Silphinene synthase peniA (372 aa).

Mg(2+) is bound by residues D116, E121, N263, S267, and E271. A DDXXE motif motif is present at residues 116 to 121; it reads DDQFDE.

Belongs to the terpene synthase family. The cofactor is Mg(2+).

The enzyme catalyses (2E,6E)-farnesyl diphosphate = silphinene + diphosphate. The protein operates within secondary metabolite biosynthesis; terpenoid biosynthesis. In terms of biological role, sesquiterpene cyclase; part of the gene cluster that mediates the biosynthesis of penifulvin A, a potent insecticidal sesquiterpene that features a [5.5.5.6]dioxafenestrane ring. Within the pathway, peniA catalyzes the first step and generates the angular triquinane scaffold silphinene via cyclization of the linear farnesyl pyrophosphate (FPP). The cytochrome P450 monooxygenase peniB and the flavin-dependent monooxygenase peniC then catalyze a series of oxidation reactions to transform silphinene into penifulvin A. This Penicillium patulum (Penicillium griseofulvum) protein is Silphinene synthase peniA.